Reading from the N-terminus, the 1227-residue chain is Multifunctional 2-oxoglutarate metabolism enzyme (1227 aa).

Residues 1-41 (MSSSPSPFGQNEWLVEEMYRKFRDDPSSVDPSWHEFLVDYS) are 2-oxoglutarate dehydrogenase E1, N-terminal part. The span at 23 to 37 (RDDPSSVDPSWHEFL) shows a compositional bias: basic and acidic residues. The tract at residues 23–102 (RDDPSSVDPS…SATPAKGDES (80 aa)) is disordered. Residues 42–88 (PEPTTDSASNGRTTTAAPVTPPTPAPAPAPEPKAAPKPAAKTEAKPA) are linker. Polar residues predominate over residues 43–53 (EPTTDSASNGR). Positions 60–76 (VTPPTPAPAPAPEPKAA) are enriched in pro residues. Positions 88 to 97 (AKPAKSATPA) are enriched in low complexity. Positions 89–335 (KPAKSATPAK…LRTIHQLLLD (247 aa)) are succinyltransferase E2. H314 functions as the Proton acceptor; for succinyltransferase activity in the catalytic mechanism. The tract at residues 336-1227 (DDFFDEIFRE…QQEILDTAFG (892 aa)) is 2-oxoglutarate dehydrogenase E1, C-terminal part. A thiamine diphosphate-binding site is contributed by R540. 2-oxoglutarate is bound by residues H579 and S604. Thiamine diphosphate contacts are provided by S604, L606, D645, A646, A647, and N678. D645 serves as a coordination point for Mg(2+). Mg(2+) contacts are provided by N678 and I680. The stretch at 783 to 814 (DISMKEAEDALRDYQGQLERVFNEVRELEKHE) forms a coiled coil. H1020 lines the 2-oxoglutarate pocket. Acetyl-CoA is bound by residues T1038, R1054, K1089, S1092, Q1142, R1149, and R1150.

The protein belongs to the 2-oxoacid dehydrogenase family. Kgd subfamily. In terms of assembly, homodimer. Interacts with the FHA domain of unphosphorylated GarA. The 2-oxoglutarate dehydrogenase (ODH) complex contains multiple copies of three enzymatic components: 2-oxoglutarate dehydrogenase (E1), dihydrolipoamide succinyltransferase (E2) and lipoamide dehydrogenase (E3). Mg(2+) is required as a cofactor. It depends on thiamine diphosphate as a cofactor.

It catalyses the reaction glyoxylate + 2-oxoglutarate + H(+) = 2-hydroxy-3-oxoadipate + CO2. The catalysed reaction is 2-oxoglutarate + H(+) = succinate semialdehyde + CO2. It carries out the reaction N(6)-[(R)-lipoyl]-L-lysyl-[protein] + 2-oxoglutarate + H(+) = N(6)-[(R)-S(8)-succinyldihydrolipoyl]-L-lysyl-[protein] + CO2. The enzyme catalyses N(6)-[(R)-dihydrolipoyl]-L-lysyl-[protein] + succinyl-CoA = N(6)-[(R)-S(8)-succinyldihydrolipoyl]-L-lysyl-[protein] + CoA. It participates in carbohydrate metabolism; tricarboxylic acid cycle; succinate from 2-oxoglutarate (transferase route): step 1/2. The protein operates within carbohydrate metabolism; tricarboxylic acid cycle; succinyl-CoA from 2-oxoglutarate (dehydrogenase route): step 1/1. With respect to regulation, alpha-ketoglutarate dehydrogenase and decarboxylase activities are inhibited by unphosphorylated GarA, and allosterically activated by acetyl-CoA, the main substrate of the TCA cycle. Both the phosphoadenosine and acetyl moieties of acetyl-CoA are important for activation because neither CoA nor the synthetic compound S-(2-acetamidoethyl)-ethanethioate (which mimics the terminal acetyl-phosphopantetheine group of acetyl-CoA) has an activation effect. Functionally, shows three enzymatic activities that share a first common step, the attack of thiamine-PP on 2-oxoglutarate (alpha-ketoglutarate, KG), leading to the formation of an enamine-thiamine-PP intermediate upon decarboxylation. Thus, displays KGD activity, catalyzing the decarboxylation from five-carbon 2-oxoglutarate to four-carbon succinate semialdehyde (SSA). Also catalyzes C-C bond formation between the activated aldehyde formed after decarboxylation of alpha-ketoglutarate and the carbonyl of glyoxylate (GLX), to yield 2-hydroxy-3-oxoadipate (HOA), which spontaneously decarboxylates to form 5-hydroxylevulinate (HLA). And is also a component of the 2-oxoglutarate dehydrogenase (ODH) complex, that catalyzes the overall conversion of 2-oxoglutarate to succinyl-CoA and CO(2). The KG decarboxylase and KG dehydrogenase reactions provide two alternative, tightly regulated, pathways connecting the oxidative and reductive branches of the TCA cycle. This chain is Multifunctional 2-oxoglutarate metabolism enzyme (kgd), found in Mycolicibacterium smegmatis (strain ATCC 700084 / mc(2)155) (Mycobacterium smegmatis).